A 421-amino-acid polypeptide reads, in one-letter code: 4'-demethylrebeccamycin synthase (421 aa).

The protein belongs to the glycosyltransferase 28 family.

The catalysed reaction is 4'-demethylrebeccamycin + H2O = dichloroarcyriaflavin A + beta-D-glucose. The protein operates within alkaloid biosynthesis. Functionally, catalyzes the penultimate step in the biosynthesis of rebeccamycin, an indolocarbazole alkaloid that inhibits topoisomerase 1. Has a wide substrate range, including staurosporine aglycone, EJG-III-108A, J-104303, 6-N-methyl-arcyriaflavin and indolo-[2,3-a]-carbazole. This Lentzea aerocolonigenes (Lechevalieria aerocolonigenes) protein is 4'-demethylrebeccamycin synthase (rebG).